The sequence spans 330 residues: Tryptophan--tRNA ligase (330 aa).

Residues 10–12 (QPS) and 18–19 (GN) contribute to the ATP site. A 'HIGH' region motif is present at residues 11–19 (PSGTLTLGN). Aspartate 133 is a binding site for L-tryptophan. Residues 145-147 (GED), isoleucine 184, and 193-197 (KMSKS) contribute to the ATP site. Residues 193 to 197 (KMSKS) carry the 'KMSKS' region motif.

It belongs to the class-I aminoacyl-tRNA synthetase family. Homodimer.

It is found in the cytoplasm. The catalysed reaction is tRNA(Trp) + L-tryptophan + ATP = L-tryptophyl-tRNA(Trp) + AMP + diphosphate + H(+). Functionally, catalyzes the attachment of tryptophan to tRNA(Trp). This chain is Tryptophan--tRNA ligase, found in Halalkalibacterium halodurans (strain ATCC BAA-125 / DSM 18197 / FERM 7344 / JCM 9153 / C-125) (Bacillus halodurans).